The chain runs to 84 residues: Small ribosomal subunit protein bS16 (84 aa).

The protein belongs to the bacterial ribosomal protein bS16 family.

This Cupriavidus pinatubonensis (strain JMP 134 / LMG 1197) (Cupriavidus necator (strain JMP 134)) protein is Small ribosomal subunit protein bS16.